A 131-amino-acid chain; its full sequence is Small ribosomal subunit protein uS8 (131 aa).

It belongs to the universal ribosomal protein uS8 family. As to quaternary structure, part of the 30S ribosomal subunit. Contacts proteins S5 and S12.

Its function is as follows. One of the primary rRNA binding proteins, it binds directly to 16S rRNA central domain where it helps coordinate assembly of the platform of the 30S subunit. The sequence is that of Small ribosomal subunit protein uS8 from Chromobacterium violaceum (strain ATCC 12472 / DSM 30191 / JCM 1249 / CCUG 213 / NBRC 12614 / NCIMB 9131 / NCTC 9757 / MK).